The primary structure comprises 180 residues: MEMIKTLYVTGYRSFELGIFQGKDPKITVIKNVLKKELASYIETGVEWILISGNLGVELWTAEVVGELKTEYPEVQLGLLYPFKDFGNNWNEQNRELLTKAESLADYINSVSHQPYQSPAQLKMHTKFLLEHSGGSLLIYDKEYPGKTEYFLKDAQHFSEREPYDIRLITMDDLQNSVID.

It belongs to the UPF0398 family.

The protein is UPF0398 protein EF_1150 of Enterococcus faecalis (strain ATCC 700802 / V583).